A 1320-amino-acid chain; its full sequence is Transcriptional activator MN1 (1320 aa).

N-acetylmethionine is present on Met-1. Disordered regions lie at residues 1 to 26, 92 to 121, 147 to 219, 231 to 411, 423 to 442, 474 to 615, 629 to 819, 840 to 1150, and 1247 to 1273; these read MFGL…FNET, FGGQ…FGGP, PPFA…SLEP, LEYN…EYPI, SEPV…NQRL, NGSM…AGRL, SAWF…KDNL, GAPN…PDEI, and PWEK…SASQ. Basic residues predominate over residues 98-113; the sequence is HHGHPGSHHPHQHHPH. Composition is skewed to low complexity over residues 202–214 and 291–309; these read SFHG…GSDS and QPPQ…QQQQ. Residues 338 to 366 show a composition bias toward pro residues; it reads MQPPQQAPPPPQQQPPQQPPQQQPPPPPG. A compositionally biased stretch (pro residues) spans 498–514; the sequence is FTPPVPDSFPSGPPLQH. 2 stretches are compositionally biased toward low complexity: residues 523 to 550 and 564 to 578; these read QQQQ…QQQQ and RNQQ…LAQL. Composition is skewed to gly residues over residues 582 to 596 and 701 to 710; these read GDVG…GPVG and QFGGSLGGLG. The span at 759-768 shows a compositional bias: low complexity; sequence SGPGVNSPPS. A compositionally biased stretch (gly residues) spans 769–784; it reads AGGGGGSSGGGGGGGA. Composition is skewed to low complexity over residues 798–809 and 895–905; these read SASKLGALSLGS and GTSSSGSKASG. Residues 914 to 930 show a composition bias toward polar residues; it reads DGTSLSPNYTLESTSGN. Phosphoserine occurs at positions 950 and 954. Positions 973-984 are enriched in low complexity; that stretch reads GVSPGQQQASGA. The residue at position 1007 (Ser-1007) is a Phosphoserine. Polar residues predominate over residues 1048–1066; the sequence is EVSTSYANEDEVSSSSDNP. Ser-1081 carries the post-translational modification Phosphoserine. Residues 1118 to 1128 are compositionally biased toward gly residues; it reads YGGGGGPGHPG.

In terms of assembly, interacts with PBX1, PKNOX1, ZBTB24, E2F7, RING1. In terms of tissue distribution, widely expressed in fetal and adult tissues. Highest expression is observed in fetal brain and skeletal muscle, and adult skeletal muscle.

Its subcellular location is the nucleus. In terms of biological role, transcriptional activator which specifically regulates expression of TBX22 in the posterior region of the developing palate. Required during later stages of palate development for growth and medial fusion of the palatal shelves. Promotes maturation and normal function of calvarial osteoblasts, including expression of the osteoclastogenic cytokine TNFSF11/RANKL. Necessary for normal development of the membranous bones of the skull. May play a role in tumor suppression. The polypeptide is Transcriptional activator MN1 (MN1) (Homo sapiens (Human)).